Reading from the N-terminus, the 379-residue chain is 2-nitroimidazole nitrohydrolase (379 aa).

The active-site Amidino-cysteine intermediate is the cysteine 357.

It belongs to the arginine deiminase family.

The catalysed reaction is 2-nitroimidazole + H2O = 1,3-dihydro-2H-imidazol-2-one + nitrite + H(+). Functionally, involved in the biodegradation of 2-Nitroimidazole (2NI) which is a natural antibiotic and an analog of the synthetic nitroimidazoles used for treatment of tuberculosis, Chagas disease (also called American Trypanosomiasis) and cancer. Catalyzes the hydrolytic denitration of 2NI to produce imidazol-2-one and nitrite. It is also active against the 2NI synthetic derivative benznidazole. NnhA confers drug resistance to 2NI. This is 2-nitroimidazole nitrohydrolase (nnhA) from Mycobacterium sp. (strain JS330).